The sequence spans 101 residues: MNLSLREVQKLLITVAADVARRRLARGLKLNYSEAVALITDHVMEGARDGKLVADLMQSAREVLRVDQVMEGVDTMVSIIQVEVTFPDGTKLVSVHDPIYK.

This sequence belongs to the urease gamma subunit family. In terms of assembly, heterotrimer of UreA (gamma), UreB (beta) and UreC (alpha) subunits. Three heterotrimers associate to form the active enzyme.

Its subcellular location is the cytoplasm. It carries out the reaction urea + 2 H2O + H(+) = hydrogencarbonate + 2 NH4(+). The protein operates within nitrogen metabolism; urea degradation; CO(2) and NH(3) from urea (urease route): step 1/1. This is Urease subunit gamma from Ureaplasma parvum serovar 3 (strain ATCC 27815 / 27 / NCTC 11736).